The sequence spans 199 residues: Glycerol-3-phosphate acyltransferase (199 aa).

4 consecutive transmembrane segments (helical) span residues Leu-2–Val-22, Pro-77–Leu-97, Ile-113–Ala-133, and Leu-139–Leu-159.

Belongs to the PlsY family. As to quaternary structure, probably interacts with PlsX.

It is found in the cell membrane. The catalysed reaction is an acyl phosphate + sn-glycerol 3-phosphate = a 1-acyl-sn-glycero-3-phosphate + phosphate. It participates in lipid metabolism; phospholipid metabolism. Functionally, catalyzes the transfer of an acyl group from acyl-phosphate (acyl-PO(4)) to glycerol-3-phosphate (G3P) to form lysophosphatidic acid (LPA). This enzyme utilizes acyl-phosphate as fatty acyl donor, but not acyl-CoA or acyl-ACP. The sequence is that of Glycerol-3-phosphate acyltransferase from Rubrobacter xylanophilus (strain DSM 9941 / JCM 11954 / NBRC 16129 / PRD-1).